The following is a 631-amino-acid chain: DDB1- and CUL4-associated factor 8-like protein 2 (631 aa).

2 disordered regions span residues Met1 to Glu91 and Glu108 to Tyr163. Polar residues predominate over residues Ser44 to Gly54. Composition is skewed to acidic residues over residues Ser77–Glu88 and Glu108–Glu147. 7 WD repeats span residues Asp226–Asn265, Gly269–Asn310, Gln316–Lys356, Asp364–Asn404, Asp420–Tyr459, Arg467–Phe507, and Ser511–Leu550. The tract at residues Gln594–Ser631 is disordered.

It belongs to the WD repeat DCAF8 family.

This is DDB1- and CUL4-associated factor 8-like protein 2 (DCAF8L2) from Homo sapiens (Human).